Reading from the N-terminus, the 297-residue chain is Probable ABC transporter phosphite binding protein PhnD1 (297 aa).

The signal sequence occupies residues 1 to 24 (MFNLKYFLVSSSLLFSVFSSPVFS).

This sequence belongs to the phosphate/phosphite/phosphonate binding protein family. As to quaternary structure, the complex may be composed of two ATP-binding proteins (PhnC1), two transmembrane proteins (PhnE1) and a solute-binding protein (PhnD1).

It localises to the periplasm. Probably part of the ABC transporter complex PhnD1C1E1. Binds strongly to inorganic phosphite and with very weak affinities to methylphosphonate (MPn) and phosphate. This chain is Probable ABC transporter phosphite binding protein PhnD1, found in Prochlorococcus marinus (strain MIT 9301).